A 275-amino-acid chain; its full sequence is 4-hydroxy-tetrahydrodipicolinate reductase (275 aa).

Residues 8 to 13, 100 to 102, and 126 to 129 each bind NAD(+); these read GATGRM, GTT, and SPNM. Catalysis depends on His160, which acts as the Proton donor/acceptor. His161 contributes to the (S)-2,3,4,5-tetrahydrodipicolinate binding site. Catalysis depends on Lys164, which acts as the Proton donor. Position 170–171 (170–171) interacts with (S)-2,3,4,5-tetrahydrodipicolinate; the sequence is GT.

The protein belongs to the DapB family.

Its subcellular location is the cytoplasm. The catalysed reaction is (S)-2,3,4,5-tetrahydrodipicolinate + NAD(+) + H2O = (2S,4S)-4-hydroxy-2,3,4,5-tetrahydrodipicolinate + NADH + H(+). The enzyme catalyses (S)-2,3,4,5-tetrahydrodipicolinate + NADP(+) + H2O = (2S,4S)-4-hydroxy-2,3,4,5-tetrahydrodipicolinate + NADPH + H(+). Its pathway is amino-acid biosynthesis; L-lysine biosynthesis via DAP pathway; (S)-tetrahydrodipicolinate from L-aspartate: step 4/4. Catalyzes the conversion of 4-hydroxy-tetrahydrodipicolinate (HTPA) to tetrahydrodipicolinate. The polypeptide is 4-hydroxy-tetrahydrodipicolinate reductase (Methanopyrus kandleri (strain AV19 / DSM 6324 / JCM 9639 / NBRC 100938)).